We begin with the raw amino-acid sequence, 338 residues long: Probable protein S-acyltransferase 1 (338 aa).

A run of 2 helical transmembrane segments spans residues 32 to 52 (DASSLLLTTCMIGGPAIAFSI) and 68 to 88 (LTLIGAILLTFMAFTFLFLTS). The region spanning 142-192 (KFCDTCQLYRPPRAFHCSICNNCVQRFDHHCPWVGQCIALRNYPFFVCFLS) is the DHHC domain. The active-site S-palmitoyl cysteine intermediate is cysteine 172. The next 2 helical transmembrane spans lie at 186 to 206 (FFVCFLSCSTLLCIYVFVFSW) and 225 to 245 (ILGVLGLYCFVSVWFVGGLTV). The disordered stretch occupies residues 319 to 338 (FGPKDTKMSSGKSDSEARER). The segment covering 320 to 338 (GPKDTKMSSGKSDSEARER) has biased composition (basic and acidic residues).

Belongs to the DHHC palmitoyltransferase family.

The protein resides in the endosome membrane. It carries out the reaction L-cysteinyl-[protein] + hexadecanoyl-CoA = S-hexadecanoyl-L-cysteinyl-[protein] + CoA. Functionally, palmitoyl acyltransferase. This Arabidopsis thaliana (Mouse-ear cress) protein is Probable protein S-acyltransferase 1 (PAT01).